Consider the following 337-residue polypeptide: Putative F-box protein At4g09870 (337 aa).

Residues 1–46 (MSISELSQDLLEEILCRVPAISLKKLRSTCKLWNSLFIDKRVRNEL) enclose the F-box domain.

This Arabidopsis thaliana (Mouse-ear cress) protein is Putative F-box protein At4g09870.